We begin with the raw amino-acid sequence, 311 residues long: Pantothenate synthetase (311 aa).

43–50 (MGALHEGH) serves as a coordination point for ATP. Residue His-50 is the Proton donor of the active site. Residue Gln-75 participates in (R)-pantoate binding. Gln-75 contributes to the beta-alanine binding site. 161-164 (GEKD) lines the ATP pocket. Gln-167 lines the (R)-pantoate pocket. ATP is bound by residues Val-190 and 198–201 (MSSR).

Belongs to the pantothenate synthetase family. In terms of assembly, homodimer.

The protein resides in the cytoplasm. The enzyme catalyses (R)-pantoate + beta-alanine + ATP = (R)-pantothenate + AMP + diphosphate + H(+). It functions in the pathway cofactor biosynthesis; (R)-pantothenate biosynthesis; (R)-pantothenate from (R)-pantoate and beta-alanine: step 1/1. Its function is as follows. Catalyzes the condensation of pantoate with beta-alanine in an ATP-dependent reaction via a pantoyl-adenylate intermediate. This chain is Pantothenate synthetase, found in Mycolicibacterium vanbaalenii (strain DSM 7251 / JCM 13017 / BCRC 16820 / KCTC 9966 / NRRL B-24157 / PYR-1) (Mycobacterium vanbaalenii).